The sequence spans 223 residues: Neurotrophic factor BDNF precursor form (223 aa).

The signal sequence occupies residues 1–5; that stretch reads SCMKA. The propeptide occupies 6 to 114; the sequence is APMKEVSIRG…AANMSMRVRR (109 aa). N-linked (GlcNAc...) asparagine glycosylation occurs at N107. 2 disulfide bridges follow: C127-C194 and C172-C223.

It belongs to the NGF-beta family.

The protein resides in the secreted. Promotes the survival of neuronal populations that are all located either in the central nervous system or directly connected to it. This is Neurotrophic factor BDNF precursor form (BDNF) from Charina bottae (Northern rubber boa).